A 367-amino-acid chain; its full sequence is Chorismate synthase (367 aa).

NADP(+)-binding residues include arginine 48 and arginine 54. FMN-binding positions include 125–127 (RSS), 238–239 (NA), glycine 278, 293–297 (KPTSS), and arginine 319.

Belongs to the chorismate synthase family. In terms of assembly, homotetramer. FMNH2 is required as a cofactor.

The enzyme catalyses 5-O-(1-carboxyvinyl)-3-phosphoshikimate = chorismate + phosphate. It participates in metabolic intermediate biosynthesis; chorismate biosynthesis; chorismate from D-erythrose 4-phosphate and phosphoenolpyruvate: step 7/7. Functionally, catalyzes the anti-1,4-elimination of the C-3 phosphate and the C-6 proR hydrogen from 5-enolpyruvylshikimate-3-phosphate (EPSP) to yield chorismate, which is the branch point compound that serves as the starting substrate for the three terminal pathways of aromatic amino acid biosynthesis. This reaction introduces a second double bond into the aromatic ring system. The chain is Chorismate synthase from Stenotrophomonas maltophilia (strain R551-3).